The chain runs to 833 residues: Transcription factor MBP1 (833 aa).

Residues 5-111 form the HTH APSES-type domain; sequence IYSARYSGVD…FTQTDGSASP (107 aa). Positions 36–57 form a DNA-binding region, H-T-H motif; the sequence is ATHILKAANFAKAKRTRILEKE. 2 disordered regions span residues 104–223 and 280–329; these read QTDG…QSPT and QQSS…SPII. A Phosphoserine modification is found at serine 110. Basic residues predominate over residues 115–129; sequence PKHHHASKVDRKKAI. The segment covering 139–149 has biased composition (basic and acidic residues); sequence ETKRNNKKAEE. Over residues 201-223 the composition is skewed to polar residues; it reads PNSSISTTQLPSIRSTMGPQSPT. The segment covering 280–307 has biased composition (low complexity); the sequence is QQSSLIQTQQTESMATSVSSSPSLPTSP. Threonine 325 is subject to Phosphothreonine. 2 positions are modified to phosphoserine: serine 326 and serine 330. ANK repeat units lie at residues 394 to 423 and 512 to 541; these read ELHT…SIRS and NGDT…LTTI. Serine 827 carries the post-translational modification Phosphoserine.

As to quaternary structure, component of the transcription complex MCB-binding factor (MBF) composed of SWI6 and MBP1. Interacts with MSA1.

The protein resides in the nucleus. Binds to MCB elements (Mlu I cell cycle box) found in the promoter of most DNA synthesis genes. Transcriptional activation by MBF has an important role in the transition from G1 to S phase. It may have a dual role in that it behaves as an activator of transcription at the G1-S boundary and as a repressor during other stages of the cell cycle. The sequence is that of Transcription factor MBP1 (MBP1) from Saccharomyces cerevisiae (strain ATCC 204508 / S288c) (Baker's yeast).